We begin with the raw amino-acid sequence, 350 residues long: ATPase GET3 (350 aa).

26-33 (KGGVGKTT) provides a ligand contact to ATP. Residue aspartate 57 is part of the active site. ATP is bound by residues glutamate 243 and asparagine 270. Cysteine 282 and cysteine 285 together coordinate Zn(2+).

It belongs to the arsA ATPase family. Homodimer. Component of the Golgi to ER traffic (GET) complex, which is composed of GET1, GET2 and GET3. Within the complex, GET1 and GET2 form a heterotetramer which is stabilized by phosphatidylinositol binding and which binds to the GET3 homodimer. Interacts with the chloride channel protein GEF1.

It is found in the cytoplasm. Its subcellular location is the endoplasmic reticulum. The protein resides in the golgi apparatus. ATPase required for the post-translational delivery of tail-anchored (TA) proteins to the endoplasmic reticulum. Recognizes and selectively binds the transmembrane domain of TA proteins in the cytosol. This complex then targets to the endoplasmic reticulum by membrane-bound receptors GET1 and GET2, where the tail-anchored protein is released for insertion. This process is regulated by ATP binding and hydrolysis. ATP binding drives the homodimer towards the closed dimer state, facilitating recognition of newly synthesized TA membrane proteins. ATP hydrolysis is required for insertion. Subsequently, the homodimer reverts towards the open dimer state, lowering its affinity for the GET1-GET2 receptor, and returning it to the cytosol to initiate a new round of targeting. Cooperates with the HDEL receptor ERD2 to mediate the ATP-dependent retrieval of resident ER proteins that contain a C-terminal H-D-E-L retention signal from the Golgi to the ER. Involved in low-level resistance to the oxyanions arsenite and arsenate, and in heat tolerance. The polypeptide is ATPase GET3 (Candida dubliniensis (strain CD36 / ATCC MYA-646 / CBS 7987 / NCPF 3949 / NRRL Y-17841) (Yeast)).